We begin with the raw amino-acid sequence, 276 residues long: Microtubule-associated protein RP/EB family member 1A (276 aa).

The Calponin-homology (CH) domain occupies Phe13–Asp115. Residues Glu124–Gly172 form a disordered region. A compositionally biased stretch (basic and acidic residues) spans Val129 to Val141. Residues Ser162 to Gly172 are compositionally biased toward low complexity. The region spanning Pro173–Ala243 is the EB1 C-terminal domain. Residues Asn252–Ala276 form a disordered region. Acidic residues predominate over residues Val257–Glu270.

Belongs to the MAPRE family. As to quaternary structure, homodimer and heterodimer with EB1B. Interacts with tobamovirus movement protein. In terms of tissue distribution, highly expressed in guard cells of leaf stomata, pollen grains and pollen tubes. Expressed in young roots.

Its subcellular location is the cytoplasm. It is found in the cytoskeleton. The protein localises to the spindle pole. The protein resides in the phragmoplast. Binds to the plus end of microtubules and regulates the dynamics of the microtubule cytoskeleton. May be involved in anchoring microtubules to their nucleation sites and/or functioning as a reservoir for distribution to the growing end. In plants, microtubule minus ends are not necessarily severed from the nucleation site and transported to the plus end of a microtubule as part of the recycling process. May play a role in endomembrane organization during polarized growth of plant cells. Interacts with the tobamovirus movement protein (MP) and may play a role in the association of MP with the microtubule system during infection. This is Microtubule-associated protein RP/EB family member 1A (EB1A) from Arabidopsis thaliana (Mouse-ear cress).